The chain runs to 63 residues: Putative alpha-neurotoxin RjAa9 (63 aa).

Positions 1–60 (KEGYPVDWGNCKYECMSDEYCKDLCADRKATSGYCYKLNWSCYCKGLPDDSPIKTPGKCR) constitute an LCN-type CS-alpha/beta domain. 4 disulfide bridges follow: cysteine 11-cysteine 59, cysteine 15-cysteine 35, cysteine 21-cysteine 42, and cysteine 25-cysteine 44.

Belongs to the long (4 C-C) scorpion toxin superfamily. Sodium channel inhibitor family. Alpha subfamily. In terms of tissue distribution, expressed by the venom gland.

The protein resides in the secreted. Alpha toxins bind voltage-independently at site-3 of sodium channels (Nav) and inhibits the inactivation of the activated channels, thereby blocking neuronal transmission. This Rhopalurus junceus (Caribbean blue scorpion) protein is Putative alpha-neurotoxin RjAa9.